We begin with the raw amino-acid sequence, 212 residues long: Cyclin-dependent kinase 2-interacting protein (212 aa).

Met1 bears the N-acetylmethionine mark. Ser69 and Ser73 each carry phosphoserine. Residues 73–107 are a coiled coil; it reads SKENEEKVCLEYNEELEKLCEELQATLDGLTKIQV. A Na(+)-binding site is contributed by Ser202.

The protein belongs to the CINP family. As to quaternary structure, homodimer. Part of the 55LCC heterohexameric ATPase complex composed at least of AIRIM, AFG2A, AFG2B and CINP. Interacts with AIRIM. Interacts with CDK2 and CDC7. Interacts with the components of the replication complex, MCM2, MCM3, MCM4, MCM5, MCM6, MCM7 and with ORC2-containing complexes. Interacts with ATRIP. Interacts with CEP152. Associates with pre-60S ribosomal particles. In terms of processing, phosphorylated by CDC7 but not by CDK2.

The protein localises to the nucleus. Its function is as follows. Component of the DNA replication complex, which interacts with two kinases, CDK2 and CDC7, thereby providing a functional and physical link between CDK2 and CDC7 during firing of the origins of replication. Regulates ATR-mediated checkpoint signaling in response to DNA damage. Part of the 55LCC heterohexameric ATPase complex which is chromatin-associated and promotes replisome proteostasis to maintain replication fork progression and genome stability. Required for replication fork progression, sister chromatid cohesion, and chromosome stability. The ATPase activity is specifically enhanced by replication fork DNA and is coupled to cysteine protease-dependent cleavage of replisome substrates in response to replication fork damage. Uses ATPase activity to process replisome substrates in S-phase, facilitating their proteolytic turnover from chromatin to ensure DNA replication and mitotic fidelity. As part of 55LCC complex, also involved in the cytoplasmic maturation steps of pre-60S ribosomal particles by promoting the release of shuttling protein RSL24D1/RLP24 from the pre-ribosomal particles. The chain is Cyclin-dependent kinase 2-interacting protein from Homo sapiens (Human).